Here is a 486-residue protein sequence, read N- to C-terminus: Ribulose bisphosphate carboxylase large chain (486 aa).

2 residues coordinate substrate: asparagine 126 and threonine 176. The active-site Proton acceptor is the lysine 178. A substrate-binding site is contributed by lysine 180. Mg(2+) is bound by residues lysine 204, aspartate 206, and glutamate 207. Lysine 204 is modified (N6-carboxylysine). Histidine 296 functions as the Proton acceptor in the catalytic mechanism. Substrate is bound by residues arginine 297, histidine 329, and serine 381.

Belongs to the RuBisCO large chain family. Type I subfamily. Heterohexadecamer of 8 large chains and 8 small chains. Mg(2+) is required as a cofactor.

It catalyses the reaction 2 (2R)-3-phosphoglycerate + 2 H(+) = D-ribulose 1,5-bisphosphate + CO2 + H2O. The catalysed reaction is D-ribulose 1,5-bisphosphate + O2 = 2-phosphoglycolate + (2R)-3-phosphoglycerate + 2 H(+). In terms of biological role, ruBisCO catalyzes two reactions: the carboxylation of D-ribulose 1,5-bisphosphate, the primary event in carbon dioxide fixation, as well as the oxidative fragmentation of the pentose substrate. Both reactions occur simultaneously and in competition at the same active site. This Sinorhizobium medicae (strain WSM419) (Ensifer medicae) protein is Ribulose bisphosphate carboxylase large chain.